Here is a 204-residue protein sequence, read N- to C-terminus: Protein GrpE (204 aa).

The interval 1 to 42 is disordered; sequence MTDETAKNGPDAAADAQIEPQVQEETNSTAEDAGQDNNPTAA. The span at 23-41 shows a compositional bias: polar residues; sequence QEETNSTAEDAGQDNNPTA.

This sequence belongs to the GrpE family. In terms of assembly, homodimer.

The protein localises to the cytoplasm. Participates actively in the response to hyperosmotic and heat shock by preventing the aggregation of stress-denatured proteins, in association with DnaK and GrpE. It is the nucleotide exchange factor for DnaK and may function as a thermosensor. Unfolded proteins bind initially to DnaJ; upon interaction with the DnaJ-bound protein, DnaK hydrolyzes its bound ATP, resulting in the formation of a stable complex. GrpE releases ADP from DnaK; ATP binding to DnaK triggers the release of the substrate protein, thus completing the reaction cycle. Several rounds of ATP-dependent interactions between DnaJ, DnaK and GrpE are required for fully efficient folding. The chain is Protein GrpE from Allorhizobium ampelinum (strain ATCC BAA-846 / DSM 112012 / S4) (Agrobacterium vitis (strain S4)).